Consider the following 444-residue polypeptide: Platelet-activating factor acetylhydrolase (444 aa).

The first 21 residues, 1 to 21, serve as a signal peptide directing secretion; that stretch reads MLPPKLHALFCLCSCLTLVHP. Residues Asn60 and Asn200 are each glycosylated (N-linked (GlcNAc...) asparagine). Residue Ser274 is the Nucleophile of the active site. Residues Asp297 and His352 each act as charge relay system in the active site. Asn424 carries an N-linked (GlcNAc...) asparagine glycan.

Belongs to the AB hydrolase superfamily. Lipase family. Post-translationally, N-glycosylated. Plasma.

The protein localises to the secreted. The protein resides in the extracellular space. It catalyses the reaction a 1-O-alkyl-2-acetyl-sn-glycero-3-phosphocholine + H2O = a 1-O-alkyl-sn-glycero-3-phosphocholine + acetate + H(+). The enzyme catalyses 1-O-decyl-2-acetyl-sn-glycero-3-phosphocholine + H2O = 1-O-decyl-sn-glycero-3-phosphocholine + acetate + H(+). It carries out the reaction 1-O-dodecyl-2-acetyl-sn-glycero-3-phosphocholine + H2O = 1-O-dodecyl-sn-glycero-3-phosphocholine + acetate + H(+). The catalysed reaction is 1-O-tetradecyl-2-acetyl-sn-glycero-3-phosphocholine + H2O = 1-O-tetradecyl-sn-glycero-3-phosphocholine + acetate + H(+). It catalyses the reaction 1-O-hexadecyl-2-acetyl-sn-glycero-3-phosphocholine + H2O = 1-O-hexadecyl-sn-glycero-3-phosphocholine + acetate + H(+). The enzyme catalyses 1-O-octadecyl-2-acetyl-sn-glycero-3-phosphocholine + H2O = 1-O-octadecyl-sn-glycero-3-phosphocholine + acetate + H(+). It carries out the reaction 1-hexadecanoyl-2-acetyl-sn-glycero-3-phosphocholine + H2O = 1-hexadecanoyl-sn-glycero-3-phosphocholine + acetate + H(+). The catalysed reaction is 1-hexadecanoyl-2-propionyl-sn-glycero-3-phosphocholine + H2O = propanoate + 1-hexadecanoyl-sn-glycero-3-phosphocholine + H(+). It catalyses the reaction 1-hexadecanoyl-2-butanoyl-sn-glycero-3-phosphocholine + H2O = butanoate + 1-hexadecanoyl-sn-glycero-3-phosphocholine + H(+). The enzyme catalyses 1-hexadecanoyl-2-pentanoyl-sn-glycero-3-phosphocholine + H2O = pentanoate + 1-hexadecanoyl-sn-glycero-3-phosphocholine + H(+). It carries out the reaction 1-hexadecanoyl-2-glutaroyl-sn-glycero-3-phosphocholine + H2O = glutarate + 1-hexadecanoyl-sn-glycero-3-phosphocholine + H(+). The catalysed reaction is 1-hexadecanoyl-2-(5-oxopentanoyl)-sn-glycero-3-phosphocholine + H2O = 5-oxopentanoate + 1-hexadecanoyl-sn-glycero-3-phosphocholine + H(+). It catalyses the reaction 1-hexadecanoyl-2-(9-oxononanoyl)-sn-glycero-3-phosphocholine + H2O = 9-oxononanoate + 1-hexadecanoyl-sn-glycero-3-phosphocholine + H(+). The enzyme catalyses 1-hexadecanoyl-2-[9-hydroperoxy-(10E-octadecenoyl)]-sn-glycero-3-phosphocholine + H2O = 9-hydroperoxy-10E-octadecenoate + 1-hexadecanoyl-sn-glycero-3-phosphocholine + H(+). It carries out the reaction 1-hexadecanoyl-2-(10-hydroperoxy-8E-octadecenoyl)-sn-glycero-3-phosphocholine + H2O = 10-hydroperoxy-(8E)-octadecenoate + 1-hexadecanoyl-sn-glycero-3-phosphocholine + H(+). Its function is as follows. Lipoprotein-associated calcium-independent phospholipase A2 involved in phospholipid catabolism during inflammatory and oxidative stress response. At the lipid-aqueous interface, hydrolyzes the ester bond of fatty acyl group attached at sn-2 position of phospholipids (phospholipase A2 activity). Specifically targets phospholipids with a short-chain fatty acyl group at sn-2 position. Can hydrolyze phospholipids with long fatty acyl chains, only if they carry oxidized functional groups. Hydrolyzes and inactivates platelet-activating factor (PAF, 1-O-alkyl-2-acetyl-sn-glycero-3-phosphocholine), a potent pro-inflammatory signaling lipid that acts through PTAFR on various innate immune cells. Hydrolyzes oxidatively truncated phospholipids carrying an aldehyde group at omega position, preventing their accumulation in low-density lipoprotein (LDL) particles and uncontrolled pro-inflammatory effects. As part of high-density lipoprotein (HDL) particles, can hydrolyze phospholipids having long-chain fatty acyl hydroperoxides at sn-2 position and protect against potential accumulation of these oxylipins in the vascular wall. Catalyzes the release from membrane phospholipids of F2-isoprostanes, lipid biomarkers of cellular oxidative damage. The protein is Platelet-activating factor acetylhydrolase (PLA2G7) of Canis lupus familiaris (Dog).